Here is a 363-residue protein sequence, read N- to C-terminus: Phospho-N-acetylmuramoyl-pentapeptide-transferase (363 aa).

10 helical membrane passes run 3–23 (TVLIAGAFSLVVSLFGTPLYI), 55–75 (VVIILAALLAYGAAHLFTGAL), 76–96 (PTVSGLLVLLLMTGLGVVGFL), 116–136 (LAGQGLVGIVFAVLALQFPAA), 158–178 (LAVFGAVGGTVLFVVWALIIT), 190–210 (GLDGLATGATTMVLAAYVLIC), 237–257 (LAVVAAAVMGACFGFLWWNAS), 261–281 (IFMGDTGSLALGGALAGLAIL), 286–306 (ILLVLLGGLFVLITLSVILQV), and 340–360 (FWIIAGLFVFLGLGVFYAEWV).

It belongs to the glycosyltransferase 4 family. MraY subfamily. Mg(2+) is required as a cofactor.

It is found in the cell membrane. It carries out the reaction UDP-N-acetyl-alpha-D-muramoyl-L-alanyl-gamma-D-glutamyl-meso-2,6-diaminopimeloyl-D-alanyl-D-alanine + di-trans,octa-cis-undecaprenyl phosphate = di-trans,octa-cis-undecaprenyl diphospho-N-acetyl-alpha-D-muramoyl-L-alanyl-D-glutamyl-meso-2,6-diaminopimeloyl-D-alanyl-D-alanine + UMP. The protein operates within cell wall biogenesis; peptidoglycan biosynthesis. In terms of biological role, catalyzes the initial step of the lipid cycle reactions in the biosynthesis of the cell wall peptidoglycan: transfers peptidoglycan precursor phospho-MurNAc-pentapeptide from UDP-MurNAc-pentapeptide onto the lipid carrier undecaprenyl phosphate, yielding undecaprenyl-pyrophosphoryl-MurNAc-pentapeptide, known as lipid I. This Kineococcus radiotolerans (strain ATCC BAA-149 / DSM 14245 / SRS30216) protein is Phospho-N-acetylmuramoyl-pentapeptide-transferase.